A 206-amino-acid polypeptide reads, in one-letter code: Small ribosomal subunit protein uS4 (206 aa).

The interval 18-44 (NIWGRPKSPVNRREYGPGQHGQRRKGK) is disordered. The S4 RNA-binding domain maps to 94 to 157 (RRLDAVVYRA…KQLAVVLEAV (64 aa)).

This sequence belongs to the universal ribosomal protein uS4 family. As to quaternary structure, part of the 30S ribosomal subunit. Contacts protein S5. The interaction surface between S4 and S5 is involved in control of translational fidelity.

Functionally, one of the primary rRNA binding proteins, it binds directly to 16S rRNA where it nucleates assembly of the body of the 30S subunit. Its function is as follows. With S5 and S12 plays an important role in translational accuracy. In Jannaschia sp. (strain CCS1), this protein is Small ribosomal subunit protein uS4.